The primary structure comprises 79 residues: Serine protease inhibitor Kazal-type 1 (79 aa).

The first 23 residues, Met1–Ala23, serve as a signal peptide directing secretion. In terms of domain architecture, Kazal-like spans Leu26–Cys79. Disulfide bonds link Cys32-Cys61, Cys39-Cys58, and Cys47-Cys79.

It is found in the secreted. Serine protease inhibitor which exhibits anti-trypsin activity. In the pancreas, protects against trypsin-catalyzed premature activation of zymogens. In terms of biological role, in the male reproductive tract, binds to sperm heads where it modulates sperm capacitance by inhibiting calcium uptake and nitrogen oxide (NO) production. This is Serine protease inhibitor Kazal-type 1 (SPINK1) from Homo sapiens (Human).